A 222-amino-acid chain; its full sequence is Hexitol phosphatase B (222 aa).

The active-site Nucleophile is the Asp-13. A divalent metal cation contacts are provided by Asp-13 and Asp-15. Substrate is bound by residues 13–15 (DMD), 115–116 (SA), and Lys-148. Asp-15 acts as the Proton donor in catalysis. Asp-173 is an a divalent metal cation binding site.

It belongs to the HAD-like hydrolase superfamily. CbbY/CbbZ/Gph/YieH family. Mg(2+) serves as cofactor. It depends on Mn(2+) as a cofactor. Requires Co(2+) as cofactor. Zn(2+) is required as a cofactor.

It carries out the reaction sugar phosphate + H2O = sugar + phosphate.. It catalyses the reaction 2-deoxy-D-glucose 6-phosphate + H2O = 2-deoxy-D-glucose + phosphate. The catalysed reaction is D-mannitol 1-phosphate + H2O = D-mannitol + phosphate. The enzyme catalyses D-sorbitol 6-phosphate + H2O = D-sorbitol + phosphate. Its function is as follows. Sugar-phosphate phosphohydrolase that catalyzes the dephosphorylation of D-mannitol 1-phosphate and D-sorbitol 6-phosphate. Also catalyzes the dephosphorylation of 2-deoxyglucose 6-phosphate (2dGlu6P); this is a biologically important activity in vivo since it contributes to the elimination of this toxic compound and plays an important role in the resistance of E.coli to 2-deoxyglucose. To a lesser extent, is also able to dephosphorylate mannose 6-phosphate (Man6P), erythrose-4-phosphate, 2-deoxyribose-5-phosphate (2dRib5P), ribose-5-phosphate (Rib5P) and glucose-6-phosphate (Glu6P) in vitro. The protein is Hexitol phosphatase B of Escherichia coli (strain K12).